The sequence spans 228 residues: Max-interacting protein 1 (228 aa).

Disordered stretches follow at residues 29–76 (GYAS…NELE) and 161–228 (IGST…SFTS). The span at 43 to 56 (QHSKPPRRLSRAQK) shows a compositional bias: basic residues. A compositionally biased stretch (polar residues) spans 57 to 70 (HSSGSSNTSTANRS). In terms of domain architecture, bHLH spans 67 to 119 (ANRSTHNELEKNRRAHLRLCLERLKVLIPLGPDCTRHTTLGLLNKAKAHIKKL). Positions 173 to 183 (EREEIEVDVES) are enriched in acidic residues. The segment covering 216 to 228 (GYSSASVKLSFTS) has biased composition (polar residues).

In terms of assembly, interacts with SMC3. Efficient DNA binding requires dimerization with another bHLH protein. Binds DNA as a heterodimer with MAX. Interacts with RNF17. In terms of tissue distribution, high levels found in the brain, heart and lung while lower levels are seen in the liver, kidney and skeletal muscle.

It is found in the nucleus. In terms of biological role, transcriptional repressor. MXI1 binds with MAX to form a sequence-specific DNA-binding protein complex which recognizes the core sequence 5'-CAC[GA]TG-3'. MXI1 thus antagonizes MYC transcriptional activity by competing for MAX. This Homo sapiens (Human) protein is Max-interacting protein 1 (MXI1).